The chain runs to 390 residues: Galactokinase (390 aa).

Position 33–36 (33–36 (EHTD)) interacts with substrate. ATP-binding positions include serine 67 and 124–130 (GAGLSSS). Residues serine 130 and glutamate 162 each contribute to the Mg(2+) site. Catalysis depends on aspartate 174, which acts as the Proton acceptor. Residue tyrosine 224 participates in substrate binding.

The protein belongs to the GHMP kinase family. GalK subfamily.

The protein localises to the cytoplasm. It catalyses the reaction alpha-D-galactose + ATP = alpha-D-galactose 1-phosphate + ADP + H(+). Its pathway is carbohydrate metabolism; galactose metabolism. Catalyzes the transfer of the gamma-phosphate of ATP to D-galactose to form alpha-D-galactose-1-phosphate (Gal-1-P). The sequence is that of Galactokinase from Bacillus subtilis (strain 168).